The sequence spans 115 residues: Con-Ins G1b (115 aa).

An N-terminal signal peptide occupies residues Met1–Gly24. Residues Asn25–Arg29 constitute a propeptide that is removed on maturation. Pro34 carries the post-translational modification 4-hydroxyproline; partial. 3 disulfide bridges follow: Cys38–Cys101, Cys50–Cys114, and Cys100–Cys105. Residue Glu41 is modified to 4-carboxyglutamate. Positions Arg52 to Arg94 are cleaved as a propeptide — c peptide. Glu98 carries the post-translational modification 4-carboxyglutamate. At Pro104 the chain carries 4-hydroxyproline; partial. At Glu109 the chain carries 4-carboxyglutamate; partial. The residue at position 114 (Cys114) is a Cysteine amide.

It belongs to the insulin family. As to quaternary structure, heterodimer of A and B chains; disulfide-linked. In terms of tissue distribution, expressed by the venom gland.

The protein localises to the secreted. Its function is as follows. This venom insulin, from a fish-hunting cone snail, facilitates prey capture by rapidly inducing hypoglycemic shock. It is one of the smallest known insulin found in nature and lacks the C-terminal segment of the B chain that, in human insulin, mediates engagement of the insulin receptor (INSR) and assembly of the hormone's hexameric storage form. Despite lacking this segment, it both binds and activates human insulin receptor (long isoform (HIR-B) of INSR) with only a 10-fold lower potency. In vivo, intraperitoneal injection of this peptide into zebrafish lowers blood glucose with the same potency than human insulin. In addition, when applied to water, this peptide reduces overall locomotor activity of zebrafish larvae, observed as a significant decrease in the percentage of time spent swimming and movement frequency. The polypeptide is Con-Ins G1b (Conus geographus (Geography cone)).